A 365-amino-acid polypeptide reads, in one-letter code: 3-isopropylmalate dehydrogenase (365 aa).

The substrate site is built by Arg-96, Arg-106, Arg-134, and Asp-224. Residues Asp-224, Asp-248, and Asp-252 each contribute to the Mg(2+) site. An NAD(+)-binding site is contributed by 288–300; that stretch reads GSAPTIAKQNIAN.

This sequence belongs to the isocitrate and isopropylmalate dehydrogenases family. LeuB type 1 subfamily. Homodimer. Mg(2+) serves as cofactor. Mn(2+) is required as a cofactor.

It localises to the cytoplasm. It carries out the reaction (2R,3S)-3-isopropylmalate + NAD(+) = 4-methyl-2-oxopentanoate + CO2 + NADH. Its pathway is amino-acid biosynthesis; L-leucine biosynthesis; L-leucine from 3-methyl-2-oxobutanoate: step 3/4. Catalyzes the oxidation of 3-carboxy-2-hydroxy-4-methylpentanoate (3-isopropylmalate) to 3-carboxy-4-methyl-2-oxopentanoate. The product decarboxylates to 4-methyl-2 oxopentanoate. This chain is 3-isopropylmalate dehydrogenase, found in Dehalococcoides mccartyi (strain ATCC BAA-2266 / KCTC 15142 / 195) (Dehalococcoides ethenogenes (strain 195)).